Here is a 333-residue protein sequence, read N- to C-terminus: Protoheme IX farnesyltransferase (333 aa).

Low complexity predominate over residues Met1–Pro13. Positions Met1 to Ser21 are disordered. 8 consecutive transmembrane segments (helical) span residues Leu38–Leu58, Leu63–Leu83, Ala109–Val129, Leu132–Leu152, Ile160–Gly180, Trp188–Leu208, Cys245–Phe265, and Ala286–Val306.

It belongs to the UbiA prenyltransferase family. Protoheme IX farnesyltransferase subfamily.

Its subcellular location is the cell inner membrane. It carries out the reaction heme b + (2E,6E)-farnesyl diphosphate + H2O = Fe(II)-heme o + diphosphate. It functions in the pathway porphyrin-containing compound metabolism; heme O biosynthesis; heme O from protoheme: step 1/1. Converts heme B (protoheme IX) to heme O by substitution of the vinyl group on carbon 2 of heme B porphyrin ring with a hydroxyethyl farnesyl side group. This Prochlorococcus marinus (strain SARG / CCMP1375 / SS120) protein is Protoheme IX farnesyltransferase.